Reading from the N-terminus, the 365-residue chain is Medium chain reductase pydE (365 aa).

An Enoyl reductase (ER) domain is found at Lys21 to Ile362. NADP(+)-binding positions include Ser185–Val188, Tyr226, Ile274–Gly275, and Lys354–Arg355.

This sequence belongs to the zinc-containing alcohol dehydrogenase family. Monomer.

It participates in mycotoxin biosynthesis. Its function is as follows. Medium chain reductase; part of the gene cluster that mediates the biosynthesis of pyrrocidines, fungal natural products containing a macrocyclic para-cyclophane connected to a decahydrofluorene ring system that show potent antibiotic activities toward Gram-negative bacteria. Within the pathway, pydE functions synergistically with pydB, pydX and pydZ to form the cyclophane. The pathway begins with the PKS-NRPS pydA which, with the help of the trans-enoyl reductase pydC, synthesizes the polyketide-tyrosyl acyl thioester product which can be reductively off-loaded by the terminal reductase (R) domain in pydA. The alpha/beta hydrolase pydG is then required to catalyze the subsequent Knoevenagel condensation that affords the 3-pyrrolin-2-one ring, whereas the four proteins pydB, pydE, pydX and pydZ then function synergistically to form the cyclophane. PydB and the membrane-bound pydX and pydZ are lipid-binding proteins that can sequester and mold the pdyG product into the inverse S-shape. Binding of the medium chain reductase pydE to the complex would trigger the cascade oxidative cyclization. PydY is involved in the Diels-Alder cycloaddition that forms the decahydrofluorene core. Additional non-enzymatic hydroxylation yields pyrrocidine A2 which can be further reduced into pyrrocidine B by an endogenous reductase. The polypeptide is Medium chain reductase pydE (Acremonium sp).